The following is a 305-amino-acid chain: tRNA pseudouridine synthase B (305 aa).

Asp39 (nucleophile) is an active-site residue.

This sequence belongs to the pseudouridine synthase TruB family. Type 1 subfamily.

It catalyses the reaction uridine(55) in tRNA = pseudouridine(55) in tRNA. Functionally, responsible for synthesis of pseudouridine from uracil-55 in the psi GC loop of transfer RNAs. The protein is tRNA pseudouridine synthase B of Staphylococcus aureus (strain Mu50 / ATCC 700699).